Here is a 719-residue protein sequence, read N- to C-terminus: MTEPEITPELIAAHGLKPDEYERILGIIGREPSFTELGIFSAMWNEHCSYKSSKKWLRTLPTTGPQVICGPGENAGVVDIGDGQAVIFKMESHNHPSYIEPYQGAATGVGGILRDVFTMGARPIAAMNALSFGEPNHSKTAHIVKGVVEGIGGYGNAFGVPTVGGEVRFHRAYNGNCLVNAFAAGLADADKIFYSAASGVGMPVVYLGAKTGRDGVGGATMASAEFDDTIEEKRPTVQVGDPFTEKRLLEACLELMASDSVISIQDMGAAGLTCSAVEMGDKGDLGIKLQLDNVPQREANMTAYEMMLSESQERMLMVLKPEKEAVARAIFEKWDLDFAIVGETIPEDRFLILHGNEVKADLPLKALSGTAPEYDRPWVETPAAAPMAPVAEVDPIEGLKALIGSPSYAHKAWVWEQYDSQVMADTVRAPGLGAGVVRVHGTPKALAFTSDVTPRYVKANPFEGGKQAVAEAYRNLTAVGAKPLATTDNMNFGNPEKPEIMGQFVGAIKGIGAAVAALDMPIVSGNVSLYNETDGVAILPTPTIGAVGILQSLDELIAGQPEEGDVALVIGETKGHLGQSALLAELLGREDGDAPHVDLDAEKRHGEFLRANRKLVSAATDLSDGGLALAAFEMAEGAGLGLTLTVTGTAQLFGEDQARYLVAVHPDQTKALQAAAEAAGVPLQQVGQFGGEEVTLGTVSAPLVDLSRLHRGAFAAAIG.

Residue His-47 is part of the active site. 2 residues coordinate ATP: Tyr-50 and Lys-89. Residue Glu-91 coordinates Mg(2+). Residues 92–95 (SHNH) and Arg-114 contribute to the substrate site. His-93 serves as the catalytic Proton acceptor. A Mg(2+)-binding site is contributed by Asp-115. Position 238 (Gln-238) interacts with substrate. Asp-266 is a binding site for Mg(2+). 310 to 312 (ESQ) is a substrate binding site. 2 residues coordinate ATP: Asp-488 and Gly-525. Position 526 (Asn-526) interacts with Mg(2+). Ser-528 serves as a coordination point for substrate.

The protein belongs to the FGAMS family. Monomer. Part of the FGAM synthase complex composed of 1 PurL, 1 PurQ and 2 PurS subunits.

It localises to the cytoplasm. It catalyses the reaction N(2)-formyl-N(1)-(5-phospho-beta-D-ribosyl)glycinamide + L-glutamine + ATP + H2O = 2-formamido-N(1)-(5-O-phospho-beta-D-ribosyl)acetamidine + L-glutamate + ADP + phosphate + H(+). The protein operates within purine metabolism; IMP biosynthesis via de novo pathway; 5-amino-1-(5-phospho-D-ribosyl)imidazole from N(2)-formyl-N(1)-(5-phospho-D-ribosyl)glycinamide: step 1/2. Functionally, part of the phosphoribosylformylglycinamidine synthase complex involved in the purines biosynthetic pathway. Catalyzes the ATP-dependent conversion of formylglycinamide ribonucleotide (FGAR) and glutamine to yield formylglycinamidine ribonucleotide (FGAM) and glutamate. The FGAM synthase complex is composed of three subunits. PurQ produces an ammonia molecule by converting glutamine to glutamate. PurL transfers the ammonia molecule to FGAR to form FGAM in an ATP-dependent manner. PurS interacts with PurQ and PurL and is thought to assist in the transfer of the ammonia molecule from PurQ to PurL. In Cereibacter sphaeroides (strain ATCC 17025 / ATH 2.4.3) (Rhodobacter sphaeroides), this protein is Phosphoribosylformylglycinamidine synthase subunit PurL.